The sequence spans 163 residues: Shikimate kinase (163 aa).

Residue 10 to 15 (GVGKTT) coordinates ATP. Threonine 14 lines the Mg(2+) pocket. Aspartate 28, arginine 52, and glycine 75 together coordinate substrate. Arginine 116 lines the ATP pocket. Arginine 134 serves as a coordination point for substrate. Arginine 151 is a binding site for ATP.

It belongs to the shikimate kinase family. In terms of assembly, monomer. Mg(2+) is required as a cofactor.

It localises to the cytoplasm. It carries out the reaction shikimate + ATP = 3-phosphoshikimate + ADP + H(+). Its pathway is metabolic intermediate biosynthesis; chorismate biosynthesis; chorismate from D-erythrose 4-phosphate and phosphoenolpyruvate: step 5/7. Its function is as follows. Catalyzes the specific phosphorylation of the 3-hydroxyl group of shikimic acid using ATP as a cosubstrate. The chain is Shikimate kinase from Streptococcus pyogenes serotype M4 (strain MGAS10750).